We begin with the raw amino-acid sequence, 60 residues long: uncharacterized protein (60 aa).

This is an uncharacterized protein from Lepidoptera (butterflies and moths).